A 218-amino-acid chain; its full sequence is Calcineurin B-like protein 5 (218 aa).

4 consecutive EF-hand domains span residues 35–69 (EVEALYDLFRKLSNSIIKDGLIHKEEFHLALFRNK), 70–105 (KTNLFVDRVFDLFDQKGNGVIEFDEFVRSLSVFHPD), 107–142 (PEEQKAGFAFKLYDLRQTGFIERHELKEMVLALLDE), and 151–186 (AVEMIVDRTFDQADTKGDERIDQEEWNEFVKNNPYV).

Belongs to the calcineurin regulatory subunit family. In terms of assembly, homodimer. Expressed at low levels in roots, shoots, culms, leaves and young spikelets.

Acts as a calcium sensor. CBL proteins interact with CIPK serine-threonine protein kinases. Binding of a CBL protein to the regulatory NAF domain of a CIPK protein lead to the activation of the kinase in a calcium-dependent manner. This Oryza sativa subsp. japonica (Rice) protein is Calcineurin B-like protein 5 (CBL5).